Consider the following 486-residue polypeptide: Probable cytosol aminopeptidase (486 aa).

Residues lysine 256 and aspartate 261 each coordinate Mn(2+). The active site involves lysine 268. 3 residues coordinate Mn(2+): aspartate 280, aspartate 339, and glutamate 341. The active site involves arginine 343.

This sequence belongs to the peptidase M17 family. Mn(2+) is required as a cofactor.

Its subcellular location is the cytoplasm. It carries out the reaction Release of an N-terminal amino acid, Xaa-|-Yaa-, in which Xaa is preferably Leu, but may be other amino acids including Pro although not Arg or Lys, and Yaa may be Pro. Amino acid amides and methyl esters are also readily hydrolyzed, but rates on arylamides are exceedingly low.. The catalysed reaction is Release of an N-terminal amino acid, preferentially leucine, but not glutamic or aspartic acids.. Presumably involved in the processing and regular turnover of intracellular proteins. Catalyzes the removal of unsubstituted N-terminal amino acids from various peptides. The sequence is that of Probable cytosol aminopeptidase from Synechococcus sp. (strain ATCC 27144 / PCC 6301 / SAUG 1402/1) (Anacystis nidulans).